Consider the following 222-residue polypeptide: Large ribosomal subunit protein uL4 (222 aa).

This sequence belongs to the universal ribosomal protein uL4 family. Part of the 50S ribosomal subunit.

One of the primary rRNA binding proteins, this protein initially binds near the 5'-end of the 23S rRNA. It is important during the early stages of 50S assembly. It makes multiple contacts with different domains of the 23S rRNA in the assembled 50S subunit and ribosome. Functionally, forms part of the polypeptide exit tunnel. The chain is Large ribosomal subunit protein uL4 from Methylacidiphilum infernorum (isolate V4) (Methylokorus infernorum (strain V4)).